The chain runs to 2217 residues: DNA polymerase epsilon catalytic subunit A (2217 aa).

Cys2104, Cys2107, Cys2126, and Cys2129 together coordinate Zn(2+). A CysA-type zinc finger spans residues 2104 to 2129 (CEYCSYVSDLDLCRDGLDGKFQCPRC). Residues Cys2160, Cys2163, Cys2175, and Cys2177 each coordinate [4Fe-4S] cluster. The short motif at 2160 to 2177 (CEKCHTVKRDLMSTNCNC) is the CysB motif element.

Belongs to the DNA polymerase type-B family. Heterotetramer. Consists of 4 subunits: POL2, DPB2, DPB3 and DPB4. [4Fe-4S] cluster is required as a cofactor.

It is found in the nucleus. It carries out the reaction DNA(n) + a 2'-deoxyribonucleoside 5'-triphosphate = DNA(n+1) + diphosphate. DNA polymerase II participates in chromosomal DNA replication. This Candida glabrata (strain ATCC 2001 / BCRC 20586 / JCM 3761 / NBRC 0622 / NRRL Y-65 / CBS 138) (Yeast) protein is DNA polymerase epsilon catalytic subunit A (POL2).